Here is a 409-residue protein sequence, read N- to C-terminus: Dihydrolipoyllysine-residue succinyltransferase component of 2-oxoglutarate dehydrogenase complex (409 aa).

Residues 2–77 (AIEILVPDLP…VSKQLLGKIS (76 aa)) form the Lipoyl-binding domain. At Lys-43 the chain carries N6-lipoyllysine. Residues 83–107 (DVSSATLKATNEPTPSDRQNAAIEN) show a composition bias toward polar residues. Residues 83–114 (DVSSATLKATNEPTPSDRQNAAIENSHNHNAD) are disordered. Residues 114–151 (DQSPVIRRLLAEHDLQADQIQGSGVGGRLTREDIEREI) enclose the Peripheral subunit-binding (PSBD) domain. Catalysis depends on residues His-380 and Asp-384.

This sequence belongs to the 2-oxoacid dehydrogenase family. As to quaternary structure, forms a 24-polypeptide structural core with octahedral symmetry. Part of the 2-oxoglutarate dehydrogenase (OGDH) complex composed of E1 (2-oxoglutarate dehydrogenase), E2 (dihydrolipoamide succinyltransferase) and E3 (dihydrolipoamide dehydrogenase); the complex contains multiple copies of the three enzymatic components (E1, E2 and E3). Requires (R)-lipoate as cofactor.

It carries out the reaction N(6)-[(R)-dihydrolipoyl]-L-lysyl-[protein] + succinyl-CoA = N(6)-[(R)-S(8)-succinyldihydrolipoyl]-L-lysyl-[protein] + CoA. It participates in amino-acid degradation; L-lysine degradation via saccharopine pathway; glutaryl-CoA from L-lysine: step 6/6. In terms of biological role, E2 component of the 2-oxoglutarate dehydrogenase (OGDH) complex which catalyzes the second step in the conversion of 2-oxoglutarate to succinyl-CoA and CO(2). In Haemophilus influenzae (strain ATCC 51907 / DSM 11121 / KW20 / Rd), this protein is Dihydrolipoyllysine-residue succinyltransferase component of 2-oxoglutarate dehydrogenase complex (sucB).